Consider the following 237-residue polypeptide: Phosphatidylserine decarboxylase proenzyme (237 aa).

Serine 206 functions as the Schiff-base intermediate with substrate; via pyruvic acid in the catalytic mechanism. Residue serine 206 is modified to Pyruvic acid (Ser); by autocatalysis.

Belongs to the phosphatidylserine decarboxylase family. PSD-A subfamily. As to quaternary structure, heterodimer of a large membrane-associated beta subunit and a small pyruvoyl-containing alpha subunit. Pyruvate serves as cofactor. Is synthesized initially as an inactive proenzyme. Formation of the active enzyme involves a self-maturation process in which the active site pyruvoyl group is generated from an internal serine residue via an autocatalytic post-translational modification. Two non-identical subunits are generated from the proenzyme in this reaction, and the pyruvate is formed at the N-terminus of the alpha chain, which is derived from the carboxyl end of the proenzyme. The post-translation cleavage follows an unusual pathway, termed non-hydrolytic serinolysis, in which the side chain hydroxyl group of the serine supplies its oxygen atom to form the C-terminus of the beta chain, while the remainder of the serine residue undergoes an oxidative deamination to produce ammonia and the pyruvoyl prosthetic group on the alpha chain.

The protein localises to the cell membrane. The catalysed reaction is a 1,2-diacyl-sn-glycero-3-phospho-L-serine + H(+) = a 1,2-diacyl-sn-glycero-3-phosphoethanolamine + CO2. The protein operates within phospholipid metabolism; phosphatidylethanolamine biosynthesis; phosphatidylethanolamine from CDP-diacylglycerol: step 2/2. Its function is as follows. Catalyzes the formation of phosphatidylethanolamine (PtdEtn) from phosphatidylserine (PtdSer). This is Phosphatidylserine decarboxylase proenzyme from Mycobacteroides abscessus (strain ATCC 19977 / DSM 44196 / CCUG 20993 / CIP 104536 / JCM 13569 / NCTC 13031 / TMC 1543 / L948) (Mycobacterium abscessus).